The primary structure comprises 418 residues: Gamma-glutamyl phosphate reductase (418 aa).

Over residues 1–18 (MAIQDEMRQVAEGAREAS) the composition is skewed to basic and acidic residues. The tract at residues 1 to 22 (MAIQDEMRQVAEGAREASRTLS) is disordered.

The protein belongs to the gamma-glutamyl phosphate reductase family.

It localises to the cytoplasm. The enzyme catalyses L-glutamate 5-semialdehyde + phosphate + NADP(+) = L-glutamyl 5-phosphate + NADPH + H(+). It functions in the pathway amino-acid biosynthesis; L-proline biosynthesis; L-glutamate 5-semialdehyde from L-glutamate: step 2/2. Catalyzes the NADPH-dependent reduction of L-glutamate 5-phosphate into L-glutamate 5-semialdehyde and phosphate. The product spontaneously undergoes cyclization to form 1-pyrroline-5-carboxylate. The sequence is that of Gamma-glutamyl phosphate reductase from Syntrophus aciditrophicus (strain SB).